A 285-amino-acid polypeptide reads, in one-letter code: Homeobox protein Hox-A4 (285 aa).

2 disordered regions span residues 19-70 (PFEE…APRA) and 94-130 (ASPG…TTPA). Over residues 27-41 (GGPGGGDGAVGGGPG) the composition is skewed to gly residues. The segment covering 44–70 (RPQSAPHLPAPNPHAARQPPAYYAPRA) has biased composition (low complexity). The span at 106–118 (GAHPSPAPQPPVP) shows a compositional bias: pro residues. An Antp-type hexapeptide motif is present at residues 159 to 164 (VYPWMK). A DNA-binding region (homeobox) is located at residues 180–239 (PKRSRTAYTRQQVLELEKEFHFNRYLTRRRRIEIAHTLCLSERQVKIWFQNRRMKWKKDH). The disordered stretch occupies residues 238-285 (DHKLPNTKMRSSNTASAPAGPPGKAQTHSPHHHPHPLPGASTPIPSSI).

It belongs to the Antp homeobox family. Deformed subfamily.

Its subcellular location is the nucleus. Sequence-specific transcription factor which is part of a developmental regulatory system that provides cells with specific positional identities on the anterior-posterior axis. Binds to sites in the 5'-flanking sequence of its coding region with various affinities. The consensus sequences of the high and low affinity binding sites are 5'-TAATGA[CG]-3' and 5'-CTAATTTT-3'. The chain is Homeobox protein Hox-A4 (Hoxa4) from Mus musculus (Mouse).